The sequence spans 208 residues: Uracil phosphoribosyltransferase (208 aa).

Residues Arg78, Arg103, and 130 to 138 (DPMLATGGS) contribute to the 5-phospho-alpha-D-ribose 1-diphosphate site. Uracil-binding positions include Ile193 and 198-200 (GDA). Asp199 is a 5-phospho-alpha-D-ribose 1-diphosphate binding site.

This sequence belongs to the UPRTase family. The cofactor is Mg(2+).

The enzyme catalyses UMP + diphosphate = 5-phospho-alpha-D-ribose 1-diphosphate + uracil. It participates in pyrimidine metabolism; UMP biosynthesis via salvage pathway; UMP from uracil: step 1/1. Its activity is regulated as follows. Allosterically activated by GTP. Its function is as follows. Catalyzes the conversion of uracil and 5-phospho-alpha-D-ribose 1-diphosphate (PRPP) to UMP and diphosphate. In Citrobacter koseri (strain ATCC BAA-895 / CDC 4225-83 / SGSC4696), this protein is Uracil phosphoribosyltransferase.